The sequence spans 492 residues: N-succinylglutamate 5-semialdehyde dehydrogenase (492 aa).

220–225 (GSANTG) contacts NAD(+). Residues Glu-243 and Cys-277 contribute to the active site.

The protein belongs to the aldehyde dehydrogenase family. AstD subfamily.

It carries out the reaction N-succinyl-L-glutamate 5-semialdehyde + NAD(+) + H2O = N-succinyl-L-glutamate + NADH + 2 H(+). It participates in amino-acid degradation; L-arginine degradation via AST pathway; L-glutamate and succinate from L-arginine: step 4/5. Functionally, catalyzes the NAD-dependent reduction of succinylglutamate semialdehyde into succinylglutamate. The sequence is that of N-succinylglutamate 5-semialdehyde dehydrogenase from Escherichia coli O6:K15:H31 (strain 536 / UPEC).